The following is a 244-amino-acid chain: Tetraspanin-2A (244 aa).

Residues 1-22 (MGIGYGASDEQLEKQIGCVKYT) lie on the Cytoplasmic side of the membrane. Residues 23–43 (LFCFNIVAWMISTALFALTVW) traverse the membrane as a helical segment. Over 44–61 (LRAEPGFNDWLRILEAQS) the chain is Extracellular. Residues 62–82 (FYIGVYVLIGISIVMMAVSFL) traverse the membrane as a helical segment. Over 83-91 (GCLSALMEN) the chain is Cytoplasmic. A helical membrane pass occupies residues 92–112 (TLALFVFVGTQVFGFIAIVAG). The Extracellular portion of the chain corresponds to 113–206 (SAVLLQFSTI…TWFFEGKTGW (94 aa)). The chain crosses the membrane as a helical span at residues 207-227 (IVALAMTLGLLNVICAVMSFV). Over 228–244 (LVQAVKKEEEQASNYRR) the chain is Cytoplasmic.

The protein belongs to the tetraspanin (TM4SF) family. Forms a complex with Ssk and mesh.

It localises to the apicolateral cell membrane. The protein localises to the cell junction. It is found in the septate junction. Its function is as follows. Required for assembly of smooth septate junctions (sSJs), together with Ssk and mesh. Important for barrier function of the midgut epithelium. This is Tetraspanin-2A from Drosophila melanogaster (Fruit fly).